Here is a 345-residue protein sequence, read N- to C-terminus: Papain (345 aa).

The N-terminal stretch at 1–18 is a signal peptide; that stretch reads MAMIPSISKLLFVAICLF. Positions 19-133 are cleaved as a propeptide — activation peptide; the sequence is VYMGLSFGDF…EEVLNDGDVN (115 aa). 3 disulfide bridges follow: C155–C196, C189–C228, and C286–C333. The active site involves C158. Residue C158 participates in E64 binding. C158 contributes to the leupeptin binding site. Active-site residues include H292 and N308.

Belongs to the peptidase C1 family.

The catalysed reaction is Hydrolysis of proteins with broad specificity for peptide bonds, but preference for an amino acid bearing a large hydrophobic side chain at the P2 position. Does not accept Val in P1'.. Repressed by the active-site-directed cysteine protease inhibitor E64 (L-trans-epoxysuccinyl-leucylamide-(4-guanido)-butane) produced by Aspergillus japonicus. Inhibited by the inhibitor of cysteine proteases from Trypanosoma brucei (TbICP, rhodesain) and Colocasia esculenta cv. Kaohsiung no. 1 (CeCPI, tarocystatin). Repressed by leupeptin, a peptidic cysteine, serine and threonine protease inhibitor. Functionally, cysteine proteinase with a high level of diversity in substrate specificity, an amino acid bearing a large hydrophobic side chain at the P2 position is preferred. This is Papain from Carica papaya (Papaya).